Here is a 252-residue protein sequence, read N- to C-terminus: Imidazole glycerol phosphate synthase subunit HisF (252 aa).

Residues aspartate 11 and aspartate 130 contribute to the active site.

Belongs to the HisA/HisF family. As to quaternary structure, heterodimer of HisH and HisF.

The protein resides in the cytoplasm. The enzyme catalyses 5-[(5-phospho-1-deoxy-D-ribulos-1-ylimino)methylamino]-1-(5-phospho-beta-D-ribosyl)imidazole-4-carboxamide + L-glutamine = D-erythro-1-(imidazol-4-yl)glycerol 3-phosphate + 5-amino-1-(5-phospho-beta-D-ribosyl)imidazole-4-carboxamide + L-glutamate + H(+). It participates in amino-acid biosynthesis; L-histidine biosynthesis; L-histidine from 5-phospho-alpha-D-ribose 1-diphosphate: step 5/9. IGPS catalyzes the conversion of PRFAR and glutamine to IGP, AICAR and glutamate. The HisF subunit catalyzes the cyclization activity that produces IGP and AICAR from PRFAR using the ammonia provided by the HisH subunit. The polypeptide is Imidazole glycerol phosphate synthase subunit HisF (Bacillus thuringiensis (strain Al Hakam)).